Consider the following 285-residue polypeptide: Bifunctional protein FolD (285 aa).

NADP(+)-binding positions include Gly-166–Ser-168 and Ile-232.

It belongs to the tetrahydrofolate dehydrogenase/cyclohydrolase family. Homodimer.

The enzyme catalyses (6R)-5,10-methylene-5,6,7,8-tetrahydrofolate + NADP(+) = (6R)-5,10-methenyltetrahydrofolate + NADPH. The catalysed reaction is (6R)-5,10-methenyltetrahydrofolate + H2O = (6R)-10-formyltetrahydrofolate + H(+). The protein operates within one-carbon metabolism; tetrahydrofolate interconversion. In terms of biological role, catalyzes the oxidation of 5,10-methylenetetrahydrofolate to 5,10-methenyltetrahydrofolate and then the hydrolysis of 5,10-methenyltetrahydrofolate to 10-formyltetrahydrofolate. This Photobacterium profundum (strain SS9) protein is Bifunctional protein FolD.